The chain runs to 268 residues: 4-hydroxy-tetrahydrodipicolinate reductase (268 aa).

NAD(+) is bound by residues 10-15 (GASGRM), Asp36, 99-101 (GTT), and 123-126 (APNM). Residue His156 is the Proton donor/acceptor of the active site. (S)-2,3,4,5-tetrahydrodipicolinate is bound at residue His157. Residue Lys160 is the Proton donor of the active site. 166 to 167 (GT) is a (S)-2,3,4,5-tetrahydrodipicolinate binding site.

This sequence belongs to the DapB family.

Its subcellular location is the cytoplasm. The enzyme catalyses (S)-2,3,4,5-tetrahydrodipicolinate + NAD(+) + H2O = (2S,4S)-4-hydroxy-2,3,4,5-tetrahydrodipicolinate + NADH + H(+). It catalyses the reaction (S)-2,3,4,5-tetrahydrodipicolinate + NADP(+) + H2O = (2S,4S)-4-hydroxy-2,3,4,5-tetrahydrodipicolinate + NADPH + H(+). It functions in the pathway amino-acid biosynthesis; L-lysine biosynthesis via DAP pathway; (S)-tetrahydrodipicolinate from L-aspartate: step 4/4. Catalyzes the conversion of 4-hydroxy-tetrahydrodipicolinate (HTPA) to tetrahydrodipicolinate. In Janthinobacterium sp. (strain Marseille) (Minibacterium massiliensis), this protein is 4-hydroxy-tetrahydrodipicolinate reductase.